A 495-amino-acid chain; its full sequence is RNA-binding KH domain-containing protein PEPPER (495 aa).

KH domains are found at residues 73-140, 165-234, and 340-403; these read DCVF…MDAV, FSSV…LEAI, and QVSQ…EQLI. Positions 474–495 are disordered; the sequence is GQTYGSEYRPASDVGGYSSYNL.

In terms of assembly, interacts with HUA1 and HEN4. Detected in roots, shoots, leaves, flowers and fruits.

The protein resides in the nucleus. Its function is as follows. Regulates vegetative and gynoecium development. In concert with HUA2, antagonizes FLK by positively regulating FLC probably at transcriptional and post-transcriptional levels, and thus acts as a negative regulator of flowering. The polypeptide is RNA-binding KH domain-containing protein PEPPER (Arabidopsis thaliana (Mouse-ear cress)).